The sequence spans 490 residues: tRNA-guanine(15) transglycosylase (490 aa).

Residue D90 is the Nucleophile of the active site. Substrate is bound by residues D125 and A193. Positions 276, 278, and 281 each coordinate Zn(2+).

It belongs to the archaeosine tRNA-ribosyltransferase family. Zn(2+) is required as a cofactor.

It catalyses the reaction guanosine(15) in tRNA + 7-cyano-7-deazaguanine = 7-cyano-7-carbaguanosine(15) in tRNA + guanine. It participates in tRNA modification; archaeosine-tRNA biosynthesis. Functionally, exchanges the guanine residue with 7-cyano-7-deazaguanine (preQ0) at position 15 in the dihydrouridine loop (D-loop) of archaeal tRNAs. In Methanosarcina acetivorans (strain ATCC 35395 / DSM 2834 / JCM 12185 / C2A), this protein is tRNA-guanine(15) transglycosylase.